The primary structure comprises 126 residues: Glycine cleavage system H protein (126 aa).

Residues 23 to 104 (KVRVGITDFA…YDEGWMIEII (82 aa)) enclose the Lipoyl-binding domain. Lys64 carries the N6-lipoyllysine modification.

It belongs to the GcvH family. The glycine cleavage system is composed of four proteins: P, T, L and H. The cofactor is (R)-lipoate.

Functionally, the glycine cleavage system catalyzes the degradation of glycine. The H protein shuttles the methylamine group of glycine from the P protein to the T protein. The chain is Glycine cleavage system H protein from Chlorobium phaeobacteroides (strain BS1).